Consider the following 529-residue polypeptide: Lysophosphatidylcholine acyltransferase 2 (529 aa).

The Cytoplasmic portion of the chain corresponds to 1-50; the sequence is MPPPHRVFALPRQQSLLLPAVINPFVHDLSLSTADITKCFLLGIILVPLR. A helical; Signal-anchor for type II membrane protein transmembrane segment spans residues 51 to 71; sequence AIFLLLVLLVMWPVSVIITFG. The Lumenal segment spans residues 72 to 529; the sequence is QSLKGVVEPM…EDSASDKKDD (458 aa). The HXXXXD motif signature appears at 128 to 133; the sequence is HSSFFD. The EGTC motif signature appears at 202 to 205; the sequence is EGTC. Residue Asn-207 is glycosylated (N-linked (GlcNAc...) asparagine). 3 EF-hand domains span residues 373–408, 410–445, and 449–480; these read PISP…LCRP, NNEE…ALGV, and DVHS…HPEY. Ca(2+) is bound by residues Asp-386, Asn-388, Asp-390, Thr-392, Glu-397, Asp-423, Asp-425, Asp-427, Cys-429, Glu-434, Asp-458, Asp-460, Ser-462, His-464, and Glu-469.

The protein belongs to the 1-acyl-sn-glycerol-3-phosphate acyltransferase family.

Its subcellular location is the endoplasmic reticulum membrane. The protein resides in the golgi apparatus membrane. It is found in the cell membrane. It localises to the lipid droplet. The catalysed reaction is a 1-acyl-sn-glycero-3-phosphocholine + an acyl-CoA = a 1,2-diacyl-sn-glycero-3-phosphocholine + CoA. It catalyses the reaction a 1-O-alkyl-sn-glycero-3-phosphocholine + acetyl-CoA = a 1-O-alkyl-2-acetyl-sn-glycero-3-phosphocholine + CoA. It carries out the reaction a 1-acyl-sn-glycero-3-phosphate + an acyl-CoA = a 1,2-diacyl-sn-glycero-3-phosphate + CoA. The enzyme catalyses a 1-O-(1Z-alkenyl)-sn-glycero-3-phosphocholine + an acyl-CoA = a 1-O-(1Z-alkenyl)-2-acyl-sn-glycero-3-phosphocholine + CoA. The catalysed reaction is 1-hexadecanoyl-sn-glycero-3-phosphate + (9Z)-octadecenoyl-CoA = 1-hexadecanoyl-2-(9Z-octadecenoyl)-sn-glycero-3-phosphate + CoA. It catalyses the reaction 1-(9Z-octadecenoyl)-sn-glycero-3-phosphate + (9Z)-octadecenoyl-CoA = 1,2-di-(9Z-octadecenoyl)-sn-glycero-3-phosphate + CoA. It carries out the reaction 1-(9Z-octadecenoyl)-sn-glycero-3-phosphate + hexadecanoyl-CoA = 1-(9Z)-octadecenoyl-2-hexadecanoyl-sn-glycero-3-phosphate + CoA. The enzyme catalyses 1-heptadecanoyl-sn-glycero-3-phosphate + (9Z)-octadecenoyl-CoA = 1-heptadecanoyl-2-(9Z)-octadecenoyl-sn-glycero-3-phosphate + CoA. The catalysed reaction is 1-octadecanoyl-sn-glycero-3-phosphate + (9Z)-octadecenoyl-CoA = 1-octadecanoyl-2-(9Z-octadecenoyl)-sn-glycero-3-phosphate + CoA. It catalyses the reaction heptadecanoyl-CoA + 1-(9Z-octadecenoyl)-sn-glycero-3-phosphate = 1-(9Z)-octadecenoyl-2-heptadecanoyl-sn-glycero-3-phosphate + CoA. It carries out the reaction 1-(9Z-octadecenoyl)-sn-glycero-3-phosphate + (9Z,12Z)-octadecadienoyl-CoA = 1-(9Z)-octadecenoyl-2-(9Z,12Z)-octadecadienoyl-sn-glycero-3-phosphate + CoA. The enzyme catalyses 1-(9Z-octadecenoyl)-sn-glycero-3-phosphate + tetradecanoyl-CoA = 1-(9Z)-octadecenoyl-2-tetradecanoyl-sn-glycero-3-phosphate + CoA. The catalysed reaction is pentadecanoyl-CoA + 1-(9Z-octadecenoyl)-sn-glycero-3-phosphate = 1-(9Z)-octadecenoyl-2-pentadecanoyl-sn-glycero-3-phosphate + CoA. It catalyses the reaction nonadecanoyl-CoA + 1-(9Z-octadecenoyl)-sn-glycero-3-phosphate = 1-(9Z)-octadecenoyl-2-nonadecanoyl-sn-glycero-3-phosphate + CoA. It carries out the reaction 1-hexadecanoyl-sn-glycero-3-phosphocholine + (9Z)-octadecenoyl-CoA = 1-hexadecanoyl-2-(9Z-octadecenoyl)-sn-glycero-3-phosphocholine + CoA. The enzyme catalyses 1-O-hexadecyl-sn-glycero-3-phosphocholine + acetyl-CoA = 1-O-hexadecyl-2-acetyl-sn-glycero-3-phosphocholine + CoA. The catalysed reaction is 1-O-octadecyl-sn-glycero-3-phosphocholine + acetyl-CoA = 1-O-octadecyl-2-acetyl-sn-glycero-3-phosphocholine + CoA. It catalyses the reaction 1-hexadecanoyl-sn-glycero-3-phosphocholine + acetyl-CoA = 1-hexadecanoyl-2-acetyl-sn-glycero-3-phosphocholine + CoA. It carries out the reaction 1-octadecanoyl-sn-glycero-3-phosphocholine + acetyl-CoA = 1-octadecanoyl-2-acetyl-sn-glycero-3-phosphocholine + CoA. The enzyme catalyses a 1-O-(1Z-alkenyl)-sn-glycero-3-phosphocholine + acetyl-CoA = 1-O-(1Z)-alkenyl-2-acetyl-sn-glycero-3-phosphocholine + CoA. The catalysed reaction is 1-O-octadecyl-sn-glycero-3-phosphocholine + (5Z,8Z,11Z,14Z)-eicosatetraenoyl-CoA = 1-O-octadecyl-2-(5Z,8Z,11Z,14Z)-eicosatetraenoyl-sn-glycero-3-phosphocholine + CoA. Its pathway is lipid metabolism; phospholipid metabolism. In terms of biological role, exhibits both acyltransferase and acetyltransferase activities. Activity is calcium-dependent. Catalyzes the conversion of lysophosphatidylcholine (1-acyl-sn-glycero-3-phosphocholine or LPC) into phosphatidylcholine (1,2-diacyl-sn-glycero-3-phosphocholine or PC). Catalyzes the conversion 1-acyl-sn-glycerol-3-phosphate (lysophosphatidic acid or LPA) into 1,2-diacyl-sn-glycerol-3-phosphate (phosphatidic acid or PA) by incorporating an acyl moiety at the sn-2 position of the glycerol backbone. Involved in platelet-activating factor (PAF) biosynthesis by catalyzing the conversion of the PAF precursor, 1-O-alkyl-sn-glycero-3-phosphocholine (lyso-PAF) into 1-O-alkyl-2-acetyl-sn-glycero-3-phosphocholine (PAF). This chain is Lysophosphatidylcholine acyltransferase 2 (lpcat2), found in Danio rerio (Zebrafish).